A 173-amino-acid chain; its full sequence is Translation initiation factor IF-3 (173 aa).

Belongs to the IF-3 family. Monomer.

It is found in the cytoplasm. Functionally, IF-3 binds to the 30S ribosomal subunit and shifts the equilibrium between 70S ribosomes and their 50S and 30S subunits in favor of the free subunits, thus enhancing the availability of 30S subunits on which protein synthesis initiation begins. This is Translation initiation factor IF-3 from Methylorubrum extorquens (strain CM4 / NCIMB 13688) (Methylobacterium extorquens).